A 484-amino-acid polypeptide reads, in one-letter code: Adenylosuccinate lyase (484 aa).

N-acetylalanine is present on Ala-2. Residues Arg-20–Tyr-21, Arg-85–Asp-87, and Thr-111–Ser-112 contribute to the substrate site. The residue at position 147 (Lys-147) is an N6-acetyllysine. The active-site Proton donor/acceptor is the His-159. Residue Gln-241 coordinates substrate. Ser-289 (proton donor/acceptor) is an active-site residue. Lys-295 bears the N6-acetyllysine mark. The substrate site is built by Arg-303, Arg-329, Ser-334, and Arg-338. Lys-415 is covalently cross-linked (Glycyl lysine isopeptide (Lys-Gly) (interchain with G-Cter in SUMO1)).

The protein belongs to the lyase 1 family. Adenylosuccinate lyase subfamily. Homotetramer. Residues from neighboring subunits contribute catalytic and substrate-binding residues to each active site. In terms of tissue distribution, ubiquitously expressed. Both isoforms are produced by all tissues. Isoform 2 is 10-fold less abundant than isoform 1.

It carries out the reaction N(6)-(1,2-dicarboxyethyl)-AMP = fumarate + AMP. It catalyses the reaction (2S)-2-[5-amino-1-(5-phospho-beta-D-ribosyl)imidazole-4-carboxamido]succinate = 5-amino-1-(5-phospho-beta-D-ribosyl)imidazole-4-carboxamide + fumarate. The protein operates within purine metabolism; AMP biosynthesis via de novo pathway; AMP from IMP: step 2/2. It functions in the pathway purine metabolism; IMP biosynthesis via de novo pathway; 5-amino-1-(5-phospho-D-ribosyl)imidazole-4-carboxamide from 5-amino-1-(5-phospho-D-ribosyl)imidazole-4-carboxylate: step 2/2. The enzyme reaction kinetics indicate cooperativity between subunits. Functionally, catalyzes two non-sequential steps in de novo AMP synthesis: converts (S)-2-(5-amino-1-(5-phospho-D-ribosyl)imidazole-4-carboxamido)succinate (SAICAR) to fumarate plus 5-amino-1-(5-phospho-D-ribosyl)imidazole-4-carboxamide, and thereby also contributes to de novo IMP synthesis, and converts succinyladenosine monophosphate (SAMP) to AMP and fumarate. This chain is Adenylosuccinate lyase (ADSL), found in Homo sapiens (Human).